The primary structure comprises 406 residues: S-adenosylmethionine synthase (406 aa).

ATP is bound at residue His-16. A Mg(2+)-binding site is contributed by Asp-18. Glu-44 is a binding site for K(+). Residues Glu-57 and Gln-100 each coordinate L-methionine. Positions 100–110 (QSVDIAQGVDR) are flexible loop. ATP is bound by residues 165–167 (DAK), Asp-241, 247–248 (RK), Ala-264, and Lys-268. Position 241 (Asp-241) interacts with L-methionine. Lys-272 provides a ligand contact to L-methionine.

It belongs to the AdoMet synthase family. Homotetramer; dimer of dimers. The cofactor is Mg(2+). It depends on K(+) as a cofactor.

The protein localises to the cytoplasm. It carries out the reaction L-methionine + ATP + H2O = S-adenosyl-L-methionine + phosphate + diphosphate. It functions in the pathway amino-acid biosynthesis; S-adenosyl-L-methionine biosynthesis; S-adenosyl-L-methionine from L-methionine: step 1/1. Functionally, catalyzes the formation of S-adenosylmethionine (AdoMet) from methionine and ATP. The overall synthetic reaction is composed of two sequential steps, AdoMet formation and the subsequent tripolyphosphate hydrolysis which occurs prior to release of AdoMet from the enzyme. The polypeptide is S-adenosylmethionine synthase (Chromohalobacter salexigens (strain ATCC BAA-138 / DSM 3043 / CIP 106854 / NCIMB 13768 / 1H11)).